An 880-amino-acid polypeptide reads, in one-letter code: Alanine--tRNA ligase (880 aa).

Zn(2+)-binding residues include His567, His571, Cys669, and His673.

Belongs to the class-II aminoacyl-tRNA synthetase family. Zn(2+) serves as cofactor.

It localises to the cytoplasm. The enzyme catalyses tRNA(Ala) + L-alanine + ATP = L-alanyl-tRNA(Ala) + AMP + diphosphate. Functionally, catalyzes the attachment of alanine to tRNA(Ala) in a two-step reaction: alanine is first activated by ATP to form Ala-AMP and then transferred to the acceptor end of tRNA(Ala). Also edits incorrectly charged Ser-tRNA(Ala) and Gly-tRNA(Ala) via its editing domain. The sequence is that of Alanine--tRNA ligase from Bacillus cytotoxicus (strain DSM 22905 / CIP 110041 / 391-98 / NVH 391-98).